A 3165-amino-acid chain; its full sequence is Protein eyes shut homolog (3165 aa).

A signal peptide spans 1-21 (MTDKSIIILSLMVFHSSFING). N-linked (GlcNAc...) asparagine glycosylation is found at Asn-42, Asn-105, Asn-117, and Asn-166. EGF-like domains are found at residues 170-212 (KQQF…KYCQ), 213-254 (ELDA…KNCS), and 256-292 (IIVQ…PFCE). Intrachain disulfides connect Cys-174/Cys-189, Cys-183/Cys-200, Cys-202/Cys-211, Cys-217/Cys-228, Cys-222/Cys-242, Cys-244/Cys-253, Cys-260/Cys-270, Cys-265/Cys-280, and Cys-282/Cys-291. N-linked (GlcNAc...) asparagine glycosylation is found at Asn-252, Asn-269, and Asn-272. N-linked (GlcNAc...) asparagine glycans are attached at residues Asn-311 and Asn-343. EGF-like domains lie at 332–368 (DVSE…LLCK) and 370–406 (FQTS…KNCE). Disulfide bonds link Cys-341-Cys-356 and Cys-358-Cys-367. N-linked (GlcNAc...) asparagine glycosylation is present at Asn-382. Cys-396 and Cys-405 are oxidised to a cystine. 5 N-linked (GlcNAc...) asparagine glycosylation sites follow: Asn-506, Asn-520, Asn-521, Asn-566, and Asn-573. EGF-like domains are found at residues 566-602 (NITD…RLCV), 604-641 (NVDY…NICE), and 643-679 (DIED…TRCE). 2 cysteine pairs are disulfide-bonded: Cys-592–Cys-601 and Cys-608–Cys-620. N-linked (GlcNAc...) asparagine glycosylation is found at Asn-611 and Asn-628. Cys-629 and Cys-640 are oxidised to a cystine. N-linked (GlcNAc...) asparagine glycosylation occurs at Asn-654. Intrachain disulfides connect Cys-669-Cys-678, Cys-685-Cys-696, Cys-690-Cys-705, and Cys-707-Cys-719. One can recognise an EGF-like 9; calcium-binding domain in the interval 681-720 (DLDECALHPCKSGATCIDQPGNYFCQCGPPFKVVDGFSCL). The 37-residue stretch at 733–769 (NIDNCILNAFEHNSTYKDLHLSYQCVCLSGWEGNFCE) folds into the EGF-like 10 domain. Residue Asn-745 is glycosylated (N-linked (GlcNAc...) asparagine). Disulfide bonds link Cys-759-Cys-768, Cys-775-Cys-786, Cys-780-Cys-795, Cys-797-Cys-806, Cys-813-Cys-824, Cys-818-Cys-835, Cys-837-Cys-846, Cys-853-Cys-866, Cys-860-Cys-876, Cys-878-Cys-887, Cys-894-Cys-905, Cys-899-Cys-914, Cys-916-Cys-925, Cys-932-Cys-943, Cys-937-Cys-952, Cys-954-Cys-963, Cys-970-Cys-981, Cys-975-Cys-990, Cys-992-Cys-1001, Cys-1008-Cys-1019, Cys-1013-Cys-1028, Cys-1030-Cys-1039, Cys-1046-Cys-1056, Cys-1051-Cys-1065, Cys-1067-Cys-1076, Cys-1083-Cys-1094, Cys-1088-Cys-1103, Cys-1105-Cys-1114, Cys-1121-Cys-1137, Cys-1131-Cys-1147, Cys-1149-Cys-1158, Cys-1165-Cys-1176, Cys-1170-Cys-1185, and Cys-1187-Cys-1196. The 37-residue stretch at 771–807 (ESNECKMNPCKNNSTCTDLYKSYRCECTSGWTGQNCS) folds into the EGF-like 11; calcium-binding domain. Residues Asn-782, Asn-783, and Asn-805 are each glycosylated (N-linked (GlcNAc...) asparagine). EGF-like domains follow at residues 809–847 (EINE…QFCH), 849–888 (RYNP…KHCE), and 890–926 (DVKE…SLCE). 2 N-linked (GlcNAc...) asparagine glycosylation sites follow: Asn-862 and Asn-863. An EGF-like 15; calcium-binding domain is found at 928 to 964 (EINECSSEPCKNNGTCVDLTNRFFCNCEPGYHGPFCE). The N-linked (GlcNAc...) asparagine glycan is linked to Asn-940. Positions 966–1002 (EVNKCKISPCLDEENCVYRTDRYNCLCAPGYTGINCE) constitute an EGF-like 16 domain. The 37-residue stretch at 1004-1040 (NLDECLSEPCLHDGVCIDGINHYTCDCKSGFFGTHCE) folds into the EGF-like 17; calcium-binding domain. EGF-like domains follow at residues 1042-1077 (NAND…IQCK), 1079-1115 (KIND…AYCE), and 1117-1159 (SIDN…QFCE). The region spanning 1161-1197 (NINECSSSPCLHGANCEDHINGYVCKCQPGWSGHHCE) is the EGF-like 21; calcium-binding domain. N-linked (GlcNAc...) asparagine glycans are attached at residues Asn-1509, Asn-1906, Asn-1941, and Asn-2033. Positions 1883-2063 (FSCVCYYGDS…AVRNYHINNC (181 aa)) constitute a Laminin G-like 1 domain. 4 disulfides stabilise this stretch: Cys-2037–Cys-2063, Cys-2103–Cys-2114, Cys-2108–Cys-2128, and Cys-2130–Cys-2139. Positions 2099-2140 (APSVCQEDVCHNGGTCRPIFLSSGIVSFQCDCPLHFTGRFCE) constitute an EGF-like 22 domain. Residues 2145 to 2339 (LFFPSFSGNS…NIENCHVPWC (195 aa)) form the Laminin G-like 2 domain. N-linked (GlcNAc...) asparagine glycans are attached at residues Asn-2170, Asn-2185, and Asn-2228. Intrachain disulfides connect Cys-2308-Cys-2339, Cys-2339-Cys-2350, Cys-2344-Cys-2359, Cys-2375-Cys-2386, Cys-2380-Cys-2396, and Cys-2398-Cys-2407. 2 consecutive EGF-like domains span residues 2335 to 2368 (HVPW…YSGK) and 2371 to 2408 (QFAS…PLCT). Residue Asn-2347 is glycosylated (N-linked (GlcNAc...) asparagine). N-linked (GlcNAc...) asparagine glycosylation is found at Asn-2412, Asn-2453, Asn-2484, Asn-2506, and Asn-2532. One can recognise a Laminin G-like 3 domain in the interval 2419-2609 (SGTDAFGYTS…PNAGRSVGQC (191 aa)). 3 cysteine pairs are disulfide-bonded: Cys-2576-Cys-2609, Cys-2614-Cys-2625, and Cys-2619-Cys-2634. EGF-like domains follow at residues 2610 to 2646 (HASP…AFCT) and 2648 to 2689 (TVSI…IYCE). Asn-2635 carries N-linked (GlcNAc...) asparagine glycosylation. Disulfide bonds link Cys-2636/Cys-2645, Cys-2652/Cys-2668, Cys-2662/Cys-2677, and Cys-2679/Cys-2688. The Laminin G-like 4 domain maps to 2717–2895 (DPSFRSSELS…AKGGSNVGDC (179 aa)). N-linked (GlcNAc...) asparagine glycans are attached at residues Asn-2775, Asn-2800, and Asn-2824. 4 disulfides stabilise this stretch: Cys-2868–Cys-2895, Cys-2900–Cys-2911, Cys-2905–Cys-2920, and Cys-2922–Cys-2931. 2 consecutive EGF-like domains span residues 2896 to 2932 (DGTA…NICN) and 2933 to 2970 (QSAY…RYCE). The N-linked (GlcNAc...) asparagine glycan is linked to Asn-2914. Asn-2932 carries N-linked (GlcNAc...) asparagine glycosylation. 3 disulfide bridges follow: Cys-2937/Cys-2948, Cys-2942/Cys-2958, and Cys-2960/Cys-2969. Residues Asn-2971, Asn-3006, Asn-3036, Asn-3057, Asn-3073, and Asn-3082 are each glycosylated (N-linked (GlcNAc...) asparagine). In terms of domain architecture, Laminin G-like 5 spans 2975–3165 (FTTAKFMGNS…YDGDEQNEVT (191 aa)).

It belongs to the EYS family. Expressed in retina (at protein level).

It localises to the cell projection. The protein resides in the cilium. Its subcellular location is the photoreceptor outer segment. The protein localises to the cytoplasm. It is found in the cytoskeleton. It localises to the cilium axoneme. The protein resides in the microtubule organizing center. Its subcellular location is the centrosome. The protein localises to the secreted. It is found in the extracellular space. It localises to the extracellular matrix. The protein resides in the interphotoreceptor matrix. Its function is as follows. Required to maintain the integrity of photoreceptor cells. Specifically required for normal morphology of the photoreceptor ciliary pocket, and might thus facilitate protein trafficking between the photoreceptor inner and outer segments via the transition zone. This Macaca fascicularis (Crab-eating macaque) protein is Protein eyes shut homolog.